Consider the following 376-residue polypeptide: Putative 12-oxophytodienoate reductase 2 (376 aa).

FMN contacts are provided by residues 31–33 (PLT), Ala64, and Gln106. 178–181 (HGAH) contributes to the substrate binding site. Tyr183 (proton donor) is an active-site residue. Residues Arg230, Gly301, and 322–323 (GR) contribute to the FMN site.

The protein belongs to the NADH:flavin oxidoreductase/NADH oxidase family. It depends on FMN as a cofactor.

Putative oxophytodienoate reductase that may be involved in the biosynthesis or metabolism of oxylipin signaling molecules. The chain is Putative 12-oxophytodienoate reductase 2 (OPR2) from Oryza sativa subsp. japonica (Rice).